Reading from the N-terminus, the 350-residue chain is UDP-3-O-acylglucosamine N-acyltransferase (350 aa).

The active-site Proton acceptor is the histidine 251.

Belongs to the transferase hexapeptide repeat family. LpxD subfamily. As to quaternary structure, homotrimer.

It catalyses the reaction a UDP-3-O-[(3R)-3-hydroxyacyl]-alpha-D-glucosamine + a (3R)-hydroxyacyl-[ACP] = a UDP-2-N,3-O-bis[(3R)-3-hydroxyacyl]-alpha-D-glucosamine + holo-[ACP] + H(+). It participates in bacterial outer membrane biogenesis; LPS lipid A biosynthesis. Functionally, catalyzes the N-acylation of UDP-3-O-acylglucosamine using 3-hydroxyacyl-ACP as the acyl donor. Is involved in the biosynthesis of lipid A, a phosphorylated glycolipid that anchors the lipopolysaccharide to the outer membrane of the cell. The sequence is that of UDP-3-O-acylglucosamine N-acyltransferase from Prochlorococcus marinus (strain NATL2A).